The following is a 347-amino-acid chain: Putative phosphoesterase 078R (347 aa).

Positions 52, 87, and 211 each coordinate a divalent metal cation.

The protein belongs to the metallophosphoesterase superfamily. IIV-6 244L family.

The polypeptide is Putative phosphoesterase 078R (Invertebrate iridescent virus 3 (IIV-3)).